The chain runs to 99 residues: Aspartyl/glutamyl-tRNA(Asn/Gln) amidotransferase subunit C (99 aa).

This sequence belongs to the GatC family. As to quaternary structure, heterotrimer of A, B and C subunits.

The catalysed reaction is L-glutamyl-tRNA(Gln) + L-glutamine + ATP + H2O = L-glutaminyl-tRNA(Gln) + L-glutamate + ADP + phosphate + H(+). It catalyses the reaction L-aspartyl-tRNA(Asn) + L-glutamine + ATP + H2O = L-asparaginyl-tRNA(Asn) + L-glutamate + ADP + phosphate + 2 H(+). Its function is as follows. Allows the formation of correctly charged Asn-tRNA(Asn) or Gln-tRNA(Gln) through the transamidation of misacylated Asp-tRNA(Asn) or Glu-tRNA(Gln) in organisms which lack either or both of asparaginyl-tRNA or glutaminyl-tRNA synthetases. The reaction takes place in the presence of glutamine and ATP through an activated phospho-Asp-tRNA(Asn) or phospho-Glu-tRNA(Gln). This Cupriavidus metallidurans (strain ATCC 43123 / DSM 2839 / NBRC 102507 / CH34) (Ralstonia metallidurans) protein is Aspartyl/glutamyl-tRNA(Asn/Gln) amidotransferase subunit C.